The primary structure comprises 512 residues: Cobyric acid synthase (512 aa).

Residues 251–451 (ALDITVIRLP…IHGLFDSANF (201 aa)) enclose the GATase cobBQ-type domain. The active-site Nucleophile is the Cys332. His443 is an active-site residue.

It belongs to the CobB/CobQ family. CobQ subfamily.

Its pathway is cofactor biosynthesis; adenosylcobalamin biosynthesis. Its function is as follows. Catalyzes amidations at positions B, D, E, and G on adenosylcobyrinic A,C-diamide. NH(2) groups are provided by glutamine, and one molecule of ATP is hydrogenolyzed for each amidation. This is Cobyric acid synthase from Photorhabdus laumondii subsp. laumondii (strain DSM 15139 / CIP 105565 / TT01) (Photorhabdus luminescens subsp. laumondii).